Here is a 586-residue protein sequence, read N- to C-terminus: Assimilatory ferredoxin-dependent nitrite reductase (586 aa).

[4Fe-4S] cluster-binding residues include Cys-411, Cys-417, Cys-455, and Cys-459. Cys-459 is a siroheme binding site. Positions 566–586 are disordered; it reads SWYPFADEDEPPKTEQPMTSD.

The protein belongs to the nitrite and sulfite reductase 4Fe-4S domain family. Monomer. Siroheme is required as a cofactor. The cofactor is [4Fe-4S] cluster.

The catalysed reaction is 6 oxidized [2Fe-2S]-[ferredoxin] + NH4(+) + 2 H2O = nitrite + 6 reduced [2Fe-2S]-[ferredoxin] + 8 H(+). Its pathway is nitrogen metabolism; nitrate reduction (assimilation). Its activity is regulated as follows. Inhibited by cyanide and azide. In terms of biological role, catalyzes the reduction of nitrite to ammonium in the nitrate assimilation pathway, using ferredoxin as the electron donor. Can use reduced methyl viologen but neither NADPH nor NADH as electron donors. The chain is Assimilatory ferredoxin-dependent nitrite reductase from Haloferax mediterranei (strain ATCC 33500 / DSM 1411 / JCM 8866 / NBRC 14739 / NCIMB 2177 / R-4) (Halobacterium mediterranei).